Here is a 186-residue protein sequence, read N- to C-terminus: Protein GrpE (186 aa).

Residues 1–13 (MSENTQPEQNQPL) are compositionally biased toward polar residues. The interval 1–22 (MSENTQPEQNQPLTGAPSPEEL) is disordered.

Belongs to the GrpE family. As to quaternary structure, homodimer.

It localises to the cytoplasm. Its function is as follows. Participates actively in the response to hyperosmotic and heat shock by preventing the aggregation of stress-denatured proteins, in association with DnaK and GrpE. It is the nucleotide exchange factor for DnaK and may function as a thermosensor. Unfolded proteins bind initially to DnaJ; upon interaction with the DnaJ-bound protein, DnaK hydrolyzes its bound ATP, resulting in the formation of a stable complex. GrpE releases ADP from DnaK; ATP binding to DnaK triggers the release of the substrate protein, thus completing the reaction cycle. Several rounds of ATP-dependent interactions between DnaJ, DnaK and GrpE are required for fully efficient folding. The polypeptide is Protein GrpE (Polaromonas sp. (strain JS666 / ATCC BAA-500)).